The chain runs to 306 residues: NAD kinase 1 (306 aa).

Residue Asp-67 is the Proton acceptor of the active site. Residues Asp-67–Gly-68, Asn-149–Glu-150, Asp-181, and Thr-192–Ser-197 each bind NAD(+).

This sequence belongs to the NAD kinase family. A divalent metal cation is required as a cofactor.

It localises to the cytoplasm. It carries out the reaction NAD(+) + ATP = ADP + NADP(+) + H(+). In terms of biological role, involved in the regulation of the intracellular balance of NAD and NADP, and is a key enzyme in the biosynthesis of NADP. Catalyzes specifically the phosphorylation on 2'-hydroxyl of the adenosine moiety of NAD to yield NADP. In Trichormus variabilis (strain ATCC 29413 / PCC 7937) (Anabaena variabilis), this protein is NAD kinase 1.